The primary structure comprises 332 residues: Casein kinase II subunit alpha (332 aa).

Positions 34–319 (YEVVRKVGRG…ALEAMTHPYF (286 aa)) constitute a Protein kinase domain. ATP contacts are provided by residues 40–48 (VGRGKYSEV) and Lys-63. The active-site Proton acceptor is Asp-151.

Belongs to the protein kinase superfamily. Ser/Thr protein kinase family. CK2 subfamily. In terms of assembly, tetramer of two alpha and two beta chains (possible).

It catalyses the reaction L-seryl-[protein] + ATP = O-phospho-L-seryl-[protein] + ADP + H(+). The enzyme catalyses L-threonyl-[protein] + ATP = O-phospho-L-threonyl-[protein] + ADP + H(+). Its function is as follows. Casein kinases are operationally defined by their preferential utilization of acidic proteins such as caseins as substrates. The alpha chain contains the catalytic site. The sequence is that of Casein kinase II subunit alpha (ACK2) from Zea mays (Maize).